We begin with the raw amino-acid sequence, 64 residues long: Beta-defensin 1 (64 aa).

Residues 1 to 20 form the signal peptide; that stretch reads MRLHHLLLVLFFLVLSAGSG. Positions 21–26 are excised as a propeptide; sequence FTQGIR. Intrachain disulfides connect Cys31/Cys60, Cys38/Cys53, and Cys43/Cys61.

It belongs to the beta-defensin family. Monomer. Homodimer.

Its subcellular location is the secreted. The protein localises to the membrane. Has bactericidal activity. May act as a ligand for C-C chemokine receptor CCR6. Positively regulates the sperm motility and bactericidal activity in a CCR6-dependent manner. Binds to CCR6 and triggers Ca2+ mobilization in the sperm which is important for its motility. This chain is Beta-defensin 1 (DEFB1), found in Capra hircus (Goat).